The following is a 252-amino-acid chain: Large ribosomal subunit protein uL29m (252 aa).

Residues 1 to 39 (MSTSTVIRPVARSLLQLRKAGNTPPAFLLPCLQSSSTTS) constitute a mitochondrion transit peptide. The span at 233-242 (EDVLAEAEGE) shows a compositional bias: acidic residues. Residues 233–252 (EDVLAEAEGEAEPKPAQVTA) form a disordered region.

The protein belongs to the universal ribosomal protein uL29 family. As to quaternary structure, component of the mitochondrial large ribosomal subunit. Mature mitochondrial ribosomes consist of a small (37S) and a large (54S) subunit. The 37S subunit contains at least 33 different proteins and 1 molecule of RNA (15S). The 54S subunit contains at least 45 different proteins and 1 molecule of RNA (21S).

Its subcellular location is the mitochondrion. The polypeptide is Large ribosomal subunit protein uL29m (mrpl4) (Botryotinia fuckeliana (strain B05.10) (Noble rot fungus)).